The following is a 162-amino-acid chain: Inorganic pyrophosphatase (162 aa).

Glu-8 is a binding site for Mg(2+). Residues Lys-16, Arg-30, and Tyr-42 each contribute to the substrate site. Mg(2+) is bound by residues Asp-52, Asp-57, Asp-84, and Asp-89. Asp-89 serves as the catalytic Proton acceptor. A substrate-binding site is contributed by Tyr-126.

The protein belongs to the PPase family. As to quaternary structure, homohexamer. The cofactor is Mg(2+).

It localises to the cytoplasm. The enzyme catalyses diphosphate + H2O = 2 phosphate + H(+). In terms of biological role, catalyzes the hydrolysis of inorganic pyrophosphate (PPi) forming two phosphate ions. In Mycobacterium bovis (strain ATCC BAA-935 / AF2122/97), this protein is Inorganic pyrophosphatase.